Reading from the N-terminus, the 172-residue chain is uncharacterized protein (172 aa).

Transmembrane regions (helical) follow at residues 16-36, 68-88, and 89-109; these read IMIV…AYLI, SFLI…AGEL, and VISH…YIII.

The protein resides in the cell membrane. This is an uncharacterized protein from Methanocaldococcus jannaschii (strain ATCC 43067 / DSM 2661 / JAL-1 / JCM 10045 / NBRC 100440) (Methanococcus jannaschii).